A 692-amino-acid polypeptide reads, in one-letter code: DNA ligase (692 aa).

Residues 34 to 38 (DAEYD), 83 to 84 (SL), and Glu124 each bind NAD(+). Catalysis depends on Lys126, which acts as the N6-AMP-lysine intermediate. Residues Arg147, Glu193, Lys310, and Lys334 each contribute to the NAD(+) site. Zn(2+) contacts are provided by Cys428, Cys431, Cys446, and Cys452. A BRCT domain is found at 612 to 692 (AGVAGVSGKT…ALLALLAGNA (81 aa)).

The protein belongs to the NAD-dependent DNA ligase family. LigA subfamily. It depends on Mg(2+) as a cofactor. The cofactor is Mn(2+).

It catalyses the reaction NAD(+) + (deoxyribonucleotide)n-3'-hydroxyl + 5'-phospho-(deoxyribonucleotide)m = (deoxyribonucleotide)n+m + AMP + beta-nicotinamide D-nucleotide.. Functionally, DNA ligase that catalyzes the formation of phosphodiester linkages between 5'-phosphoryl and 3'-hydroxyl groups in double-stranded DNA using NAD as a coenzyme and as the energy source for the reaction. It is essential for DNA replication and repair of damaged DNA. This is DNA ligase from Laribacter hongkongensis (strain HLHK9).